The following is a 387-amino-acid chain: Succinate--CoA ligase [ADP-forming] subunit beta (387 aa).

The region spanning 9-245 (KDLLESYGLK…KSQENAKELK (237 aa)) is the ATP-grasp domain. ATP is bound by residues lysine 46, 53–55 (GRG), glutamate 100, tyrosine 103, and glutamate 108. Positions 200 and 214 each coordinate Mg(2+). Substrate contacts are provided by residues asparagine 265 and 322-324 (GIV).

The protein belongs to the succinate/malate CoA ligase beta subunit family. In terms of assembly, heterotetramer of two alpha and two beta subunits. Requires Mg(2+) as cofactor.

The catalysed reaction is succinate + ATP + CoA = succinyl-CoA + ADP + phosphate. The enzyme catalyses GTP + succinate + CoA = succinyl-CoA + GDP + phosphate. It participates in carbohydrate metabolism; tricarboxylic acid cycle; succinate from succinyl-CoA (ligase route): step 1/1. In terms of biological role, succinyl-CoA synthetase functions in the citric acid cycle (TCA), coupling the hydrolysis of succinyl-CoA to the synthesis of either ATP or GTP and thus represents the only step of substrate-level phosphorylation in the TCA. The beta subunit provides nucleotide specificity of the enzyme and binds the substrate succinate, while the binding sites for coenzyme A and phosphate are found in the alpha subunit. In Francisella tularensis subsp. tularensis (strain WY96-3418), this protein is Succinate--CoA ligase [ADP-forming] subunit beta.